Here is a 968-residue protein sequence, read N- to C-terminus: C-1-tetrahydrofolate synthase, cytoplasmic (968 aa).

The interval 1–338 (MSAQYQRFLK…ERLAKSQWAL (338 aa)) is methylenetetrahydrofolate dehydrogenase and cyclohydrolase. Residues 86-90 (YIRMK) and 133-135 (VQM) each bind substrate. Residues 205–207 (GRS) and serine 230 each bind NADP(+). Substrate is bound at residue 305 to 309 (PGGVG). A formyltetrahydrofolate synthetase region spans residues 339–968 (QTLPLKPQRP…TETGEIEGLF (630 aa)). 413–420 (TPLGEGKT) lines the ATP pocket.

This sequence in the N-terminal section; belongs to the tetrahydrofolate dehydrogenase/cyclohydrolase family. In the C-terminal section; belongs to the formate--tetrahydrofolate ligase family. As to quaternary structure, homodimer. Present in all tissues.

The protein localises to the cytoplasm. It catalyses the reaction (6R)-5,10-methylene-5,6,7,8-tetrahydrofolate + NADP(+) = (6R)-5,10-methenyltetrahydrofolate + NADPH. It carries out the reaction (6R)-5,10-methenyltetrahydrofolate + H2O = (6R)-10-formyltetrahydrofolate + H(+). The enzyme catalyses (6S)-5,6,7,8-tetrahydrofolate + formate + ATP = (6R)-10-formyltetrahydrofolate + ADP + phosphate. Its pathway is one-carbon metabolism; tetrahydrofolate interconversion. The sequence is that of C-1-tetrahydrofolate synthase, cytoplasmic (pug) from Drosophila melanogaster (Fruit fly).